The chain runs to 219 residues: ATP-dependent Clp protease proteolytic subunit (219 aa).

Ser101 (nucleophile) is an active-site residue. The active site involves His126.

This sequence belongs to the peptidase S14 family. In terms of assembly, component of the chloroplastic Clp protease core complex.

The protein resides in the plastid. It is found in the chloroplast stroma. It carries out the reaction Hydrolysis of proteins to small peptides in the presence of ATP and magnesium. alpha-casein is the usual test substrate. In the absence of ATP, only oligopeptides shorter than five residues are hydrolyzed (such as succinyl-Leu-Tyr-|-NHMec, and Leu-Tyr-Leu-|-Tyr-Trp, in which cleavage of the -Tyr-|-Leu- and -Tyr-|-Trp bonds also occurs).. Cleaves peptides in various proteins in a process that requires ATP hydrolysis. Has a chymotrypsin-like activity. Plays a major role in the degradation of misfolded proteins. The protein is ATP-dependent Clp protease proteolytic subunit of Chara vulgaris (Common stonewort).